Here is a 187-residue protein sequence, read N- to C-terminus: Ribonuclease HII (187 aa).

One can recognise an RNase H type-2 domain in the interval 1–187 (MIILGIDEAG…YKPVQVLLNE (187 aa)). A divalent metal cation contacts are provided by Asp7, Glu8, and Asp99.

Belongs to the RNase HII family. It depends on Mn(2+) as a cofactor. Mg(2+) is required as a cofactor.

The protein localises to the cytoplasm. It catalyses the reaction Endonucleolytic cleavage to 5'-phosphomonoester.. Endonuclease that specifically degrades the RNA of RNA-DNA hybrids. This Francisella tularensis subsp. holarctica (strain FTNF002-00 / FTA) protein is Ribonuclease HII.